The following is a 134-amino-acid chain: NADH-quinone oxidoreductase subunit A (134 aa).

The next 3 membrane-spanning stretches (helical) occupy residues 12-32 (FAIYVIGAIAICLTMIGLAAL), 64-84 (FYLVAMFFVIFDVEALYLFAW), and 93-113 (WVGFIEATIFIGLLLIGLVYL).

Belongs to the complex I subunit 3 family. NDH-1 is composed of 13 different subunits. Subunits NuoA, H, J, K, L, M, N constitute the membrane sector of the complex.

The protein localises to the cell inner membrane. It catalyses the reaction a quinone + NADH + 5 H(+)(in) = a quinol + NAD(+) + 4 H(+)(out). NDH-1 shuttles electrons from NADH, via FMN and iron-sulfur (Fe-S) centers, to quinones in the respiratory chain. The immediate electron acceptor for the enzyme in this species is believed to be ubiquinone. Couples the redox reaction to proton translocation (for every two electrons transferred, four hydrogen ions are translocated across the cytoplasmic membrane), and thus conserves the redox energy in a proton gradient. The chain is NADH-quinone oxidoreductase subunit A from Shewanella oneidensis (strain ATCC 700550 / JCM 31522 / CIP 106686 / LMG 19005 / NCIMB 14063 / MR-1).